The chain runs to 180 residues: Oligoribonuclease (180 aa).

An Exonuclease domain is found at 7–170 (LIWIDLEMTG…DDIRESIAEL (164 aa)). The active site involves Y128.

This sequence belongs to the oligoribonuclease family.

Its subcellular location is the cytoplasm. In terms of biological role, 3'-to-5' exoribonuclease specific for small oligoribonucleotides. This is Oligoribonuclease from Pseudomonas putida (strain ATCC 700007 / DSM 6899 / JCM 31910 / BCRC 17059 / LMG 24140 / F1).